Reading from the N-terminus, the 331-residue chain is Phenylalanine--tRNA ligase alpha subunit (331 aa).

Glutamate 254 contributes to the Mg(2+) binding site.

The protein belongs to the class-II aminoacyl-tRNA synthetase family. Phe-tRNA synthetase alpha subunit type 1 subfamily. As to quaternary structure, tetramer of two alpha and two beta subunits. The cofactor is Mg(2+).

It localises to the cytoplasm. It catalyses the reaction tRNA(Phe) + L-phenylalanine + ATP = L-phenylalanyl-tRNA(Phe) + AMP + diphosphate + H(+). This chain is Phenylalanine--tRNA ligase alpha subunit, found in Blochmanniella pennsylvanica (strain BPEN).